The sequence spans 904 residues: Protein translocase subunit SecA (904 aa).

ATP contacts are provided by residues Gln-87, 105-109 (GEGKT), and Asp-512. A disordered region spans residues 851–870 (LARQQQLSHQTDNSALMSEE). Residues Cys-888, Cys-890, Cys-899, and His-900 each contribute to the Zn(2+) site.

It belongs to the SecA family. Monomer and homodimer. Part of the essential Sec protein translocation apparatus which comprises SecA, SecYEG and auxiliary proteins SecDF-YajC and YidC. Zn(2+) serves as cofactor.

The protein resides in the cell inner membrane. The protein localises to the cytoplasm. It carries out the reaction ATP + H2O + cellular proteinSide 1 = ADP + phosphate + cellular proteinSide 2.. In terms of biological role, part of the Sec protein translocase complex. Interacts with the SecYEG preprotein conducting channel. Has a central role in coupling the hydrolysis of ATP to the transfer of proteins into and across the cell membrane, serving both as a receptor for the preprotein-SecB complex and as an ATP-driven molecular motor driving the stepwise translocation of polypeptide chains across the membrane. This chain is Protein translocase subunit SecA, found in Yersinia pseudotuberculosis serotype O:1b (strain IP 31758).